Reading from the N-terminus, the 620-residue chain is MAU2 chromatid cohesion factor homolog (620 aa).

TPR repeat units follow at residues 452–485 and 492–525; these read GGFYYVQGLHAFHKNSFHEAKRFLRETLKMANAE and SCSLVLLSHVFLSIGNSKESMNMVTPAMQLASKI.

Belongs to the SCC4/mau-2 family. As to quaternary structure, interacts with Nipped-B to form the cohesin loading complex.

Its subcellular location is the nucleus. The protein resides in the nucleoplasm. Its function is as follows. Required for association of the cohesin complex with chromatin during interphase. Plays a role in sister chromatid cohesion and normal progression through prometaphase. This Drosophila persimilis (Fruit fly) protein is MAU2 chromatid cohesion factor homolog.